A 726-amino-acid polypeptide reads, in one-letter code: Cyclic nucleotide-gated ion channel 2 (726 aa).

Residues 1 to 127 (MPSHPNFIFR…SKRVQRWNRA (127 aa)) lie on the Cytoplasmic side of the membrane. The segment at 26–46 (IDENSNLQINGGDSSSSGSDE) is disordered. The span at 36–45 (GGDSSSSGSD) shows a compositional bias: low complexity. Residues 128–148 (LLLARGMALAVDPLFFYALSI) form a helical membrane-spanning segment. Residues 149–162 (GRTTGPACLYMDGA) are Extracellular-facing. The helical transmembrane segment at 163-183 (FAAVVTVLRTCLDAVHLWHVW) threads the bilayer. The Cytoplasmic portion of the chain corresponds to 184 to 219 (LQFRLAYVSRESLVVGCGKLVWDPRAIASHYARSLT). The chain crosses the membrane as a helical span at residues 220-240 (GFWFDVIVILPVPQAVFWLVV). The Extracellular segment spans residues 241 to 254 (PKLIREEKVKLIMT). A helical membrane pass occupies residues 255-275 (ILLLIFLFQFLPKIYHCICLM). The Cytoplasmic segment spans residues 276–282 (RRMQKVT). The helical transmembrane segment at 283–303 (GYIFGTIWWGFALNLIAYFIA) threads the bilayer. At 304–424 (SHVAGGCWYV…ANDLEPTSNW (121 aa)) the chain is on the extracellular side. The chain crosses the membrane as a helical span at residues 425–445 (LEVIFSIVMVLSGLLLFTLLI). Over 446 to 726 (GNIQVFLHAV…MSIRPHDHLE (281 aa)) the chain is Cytoplasmic. A nucleoside 3',5'-cyclic phosphate-binding positions include 531 to 661 (LFRG…ARYY) and Asp600. Residues 645 to 661 (FRYKFANERLKRTARYY) form a calmodulin-binding region. Positions 666 to 695 (RTWAAVNIQMAWRRRRKRTRGENIGGSMSP) constitute an IQ domain.

It belongs to the cyclic nucleotide-gated cation channel (TC 1.A.1.5) family. As to quaternary structure, homotetramer or heterotetramer (Potential). Binds calmodulin-1/4 with a higher affinity than calmodulin-2/3/5. Expressed in the whole plant but only weakly in roots. Strongly expressed in the expanded cotyledons of 14-day-old seedlings and detected later in leaves after the transition to flowering. Also detected in flowers during organ senescence and in the dehiscence zone of siliques.

The protein localises to the cell membrane. Acts as a cyclic nucleotide-gated ion channel. Permeable to potassium and calcium in a cyclic nucleotide-dependent fashion (cAMP or cGMP). Could also transport lithium, cesium and rubium and displays a strong selectivity against sodium. Seems to directly participate in pathogen-induced calcium influx. May function in homeostasis, re-establishing ionic balance after defense action and/or other stimuli. Could mediate the initiation of the developmentally regulated cell death programs. This chain is Cyclic nucleotide-gated ion channel 2 (CNGC2), found in Arabidopsis thaliana (Mouse-ear cress).